Consider the following 61-residue polypeptide: Small ribosomal subunit protein uS14B (61 aa).

Residues cysteine 24, cysteine 27, cysteine 40, and cysteine 43 each contribute to the Zn(2+) site.

The protein belongs to the universal ribosomal protein uS14 family. Zinc-binding uS14 subfamily. Part of the 30S ribosomal subunit. Contacts proteins S3 and S10. Zn(2+) serves as cofactor.

Binds 16S rRNA, required for the assembly of 30S particles and may also be responsible for determining the conformation of the 16S rRNA at the A site. The protein is Small ribosomal subunit protein uS14B of Staphylococcus epidermidis (strain ATCC 35984 / DSM 28319 / BCRC 17069 / CCUG 31568 / BM 3577 / RP62A).